Here is a 198-residue protein sequence, read N- to C-terminus: Glycerol-3-phosphate acyltransferase (198 aa).

5 helical membrane passes run 2-22 (YAVLTAIIAYLIGCINNAYIL), 48-70 (LGYKAAAPVFALDVLKGVIAVLI), 75-97 (MGNTGAMIAGIAVVCGHNWPVFL), 111-131 (VVMTVSPLLGLIALAIGVTVI), and 154-174 (IFWNSTQIFIFSLILASLAIF).

It belongs to the PlsY family. As to quaternary structure, probably interacts with PlsX.

It is found in the cell membrane. The catalysed reaction is an acyl phosphate + sn-glycerol 3-phosphate = a 1-acyl-sn-glycero-3-phosphate + phosphate. It participates in lipid metabolism; phospholipid metabolism. Functionally, catalyzes the transfer of an acyl group from acyl-phosphate (acyl-PO(4)) to glycerol-3-phosphate (G3P) to form lysophosphatidic acid (LPA). This enzyme utilizes acyl-phosphate as fatty acyl donor, but not acyl-CoA or acyl-ACP. The protein is Glycerol-3-phosphate acyltransferase of Thermoanaerobacter pseudethanolicus (strain ATCC 33223 / 39E) (Clostridium thermohydrosulfuricum).